The primary structure comprises 274 residues: Large ribosomal subunit protein uL2cz/uL2cy (274 aa).

Disordered stretches follow at residues 1–23 (MAIHLYKTSTPSTRNGAVGSQVK) and 223–274 (MNPV…RRSK).

It belongs to the universal ribosomal protein uL2 family. Part of the 50S ribosomal subunit.

It is found in the plastid. The protein resides in the chloroplast. This is Large ribosomal subunit protein uL2cz/uL2cy (rpl2-A) from Ranunculus macranthus (Large buttercup).